Consider the following 210-residue polypeptide: ATP-dependent Clp protease proteolytic subunit (210 aa).

Ser-106 serves as the catalytic Nucleophile. Residue His-131 is part of the active site.

The protein belongs to the peptidase S14 family. Fourteen ClpP subunits assemble into 2 heptameric rings which stack back to back to give a disk-like structure with a central cavity, resembling the structure of eukaryotic proteasomes.

The protein localises to the cytoplasm. The enzyme catalyses Hydrolysis of proteins to small peptides in the presence of ATP and magnesium. alpha-casein is the usual test substrate. In the absence of ATP, only oligopeptides shorter than five residues are hydrolyzed (such as succinyl-Leu-Tyr-|-NHMec, and Leu-Tyr-Leu-|-Tyr-Trp, in which cleavage of the -Tyr-|-Leu- and -Tyr-|-Trp bonds also occurs).. Cleaves peptides in various proteins in a process that requires ATP hydrolysis. Has a chymotrypsin-like activity. Plays a major role in the degradation of misfolded proteins. The protein is ATP-dependent Clp protease proteolytic subunit of Bartonella quintana (strain Toulouse) (Rochalimaea quintana).